We begin with the raw amino-acid sequence, 142 residues long: Hemoglobin subunit beta-C (142 aa).

The Globin domain maps to 2-142 (PNKALITGFW…VASALAHRYH (141 aa)). Positions 59 and 88 each coordinate heme b.

It belongs to the globin family. Heterotetramer of two alpha chains and two beta chains. As to expression, red blood cells.

In terms of biological role, involved in oxygen transport from the lung to the various peripheral tissues. In Ovis aries (Sheep), this protein is Hemoglobin subunit beta-C (HBBC).